Consider the following 223-residue polypeptide: Small ribosomal subunit protein uS3 (223 aa).

Residues 38 to 106 (IKKYLKSKLA…EVHLNIVEIR (69 aa)) form the KH type-2 domain.

This sequence belongs to the universal ribosomal protein uS3 family. As to quaternary structure, part of the 30S ribosomal subunit. Forms a tight complex with proteins S10 and S14.

Binds the lower part of the 30S subunit head. Binds mRNA in the 70S ribosome, positioning it for translation. In Rhodospirillum rubrum (strain ATCC 11170 / ATH 1.1.1 / DSM 467 / LMG 4362 / NCIMB 8255 / S1), this protein is Small ribosomal subunit protein uS3.